The primary structure comprises 990 residues: Mediator of RNA polymerase II transcription subunit 5 (990 aa).

Belongs to the Mediator complex subunit 5 family. Component of the Mediator complex.

It localises to the nucleus. In terms of biological role, component of the Mediator complex, a coactivator involved in the regulated transcription of nearly all RNA polymerase II-dependent genes. Mediator functions as a bridge to convey information from gene-specific regulatory proteins to the basal RNA polymerase II transcription machinery. Mediator is recruited to promoters by direct interactions with regulatory proteins and serves as a scaffold for the assembly of a functional preinitiation complex with RNA polymerase II and the general transcription factors. In Debaryomyces hansenii (strain ATCC 36239 / CBS 767 / BCRC 21394 / JCM 1990 / NBRC 0083 / IGC 2968) (Yeast), this protein is Mediator of RNA polymerase II transcription subunit 5 (NUT1).